Reading from the N-terminus, the 244-residue chain is Flagellar L-ring protein (244 aa).

An N-terminal signal peptide occupies residues 1–18; sequence MNMRVFIFLIFAAASVSA. The N-palmitoyl cysteine moiety is linked to residue C19. The S-diacylglycerol cysteine moiety is linked to residue C19.

It belongs to the FlgH family. In terms of assembly, the basal body constitutes a major portion of the flagellar organelle and consists of four rings (L,P,S, and M) mounted on a central rod.

The protein localises to the cell outer membrane. The protein resides in the bacterial flagellum basal body. In terms of biological role, assembles around the rod to form the L-ring and probably protects the motor/basal body from shearing forces during rotation. The protein is Flagellar L-ring protein of Jannaschia sp. (strain CCS1).